The primary structure comprises 499 residues: MLSKTSLLSLLSLAAGVVNADFGITTSDSYVINANSPNSLVFTVDRGSCDITSIVHYGTELQYSGKGSHIGSGLGTATVSATKSGDYIKVTCETDTLTQYMGVHDGDRIIHMATYITEEPSIGELRFIARLNSDVLPNEEPFGDVSNTADGEPIEGSDVFLVDGETRSKFYSSQRFIDDQRHCIAGDEHRVCMILNQYETSSGGPFHRDINSNNGGDYNSLYWYMNSGHVQLESYRMGLHGPYSMYFSRSGTPSTDIDTSFFADLDIEGYVAESGRGTVSGTASGADSSFDWVVHWYNDDAQYWTYTSSSGSFTSPAMKPGTYTMVYYQGEYVVATSEVTVSAGSSTSKDISGSVETGTTIFKIGDWDGQPTGFRNAENQLRMHPSDSRMSDWGPLTYTVGSSSLTDFPMAIFKSVNSPVTIKFTATSDQTGAATLRIRTTLSFAGGRPQATINDYEGSAPSAPTNLDSRGVTRGAYRGYGDVYDVSVPEGTIVEGENT.

A signal peptide spans 1 to 20 (MLSKTSLLSLLSLAAGVVNA). 2 disulfides stabilise this stretch: Cys49–Cys92 and Cys183–Cys192.

This sequence belongs to the polysaccharide lyase 4 family.

The protein localises to the secreted. The enzyme catalyses Endotype eliminative cleavage of L-alpha-rhamnopyranosyl-(1-&gt;4)-alpha-D-galactopyranosyluronic acid bonds of rhamnogalacturonan I domains in ramified hairy regions of pectin leaving L-rhamnopyranose at the reducing end and 4-deoxy-4,5-unsaturated D-galactopyranosyluronic acid at the non-reducing end.. Its function is as follows. Pectinolytic enzymes consist of four classes of enzymes: pectin lyase, polygalacturonase, pectin methylesterase and rhamnogalacturonase. Degrades the rhamnogalacturonan I (RG-I) backbone of pectin. This chain is Rhamnogalacturonate lyase A (rglA), found in Aspergillus niger.